A 185-amino-acid polypeptide reads, in one-letter code: Ribosome-recycling factor (185 aa).

The protein belongs to the RRF family.

The protein resides in the cytoplasm. In terms of biological role, responsible for the release of ribosomes from messenger RNA at the termination of protein biosynthesis. May increase the efficiency of translation by recycling ribosomes from one round of translation to another. This is Ribosome-recycling factor from Neorickettsia sennetsu (strain ATCC VR-367 / Miyayama) (Ehrlichia sennetsu).